The following is an 806-amino-acid chain: G-type lectin S-receptor-like serine/threonine-protein kinase At1g61430 (806 aa).

The signal sequence occupies residues 1-24 (MGKKRIVFFAYLPFFTIFMSFSFA). The Bulb-type lectin domain maps to 25–144 (GITKESPFSI…VSGRTLWQSF (120 aa)). Residues 25–425 (GITKESPFSI…ELDVNKRKMT (401 aa)) lie on the Extracellular side of the membrane. Residues Asn53, Asn94, Asn117, and Asn236 are each glycosylated (N-linked (GlcNAc...) asparagine). An EGF-like domain is found at 277 to 313 (PANSCDIYGVCGPFGLCVVSIPPKCKCFKGFVPKFAK). Intrachain disulfides connect Cys281–Cys293 and Cys287–Cys301. 3 N-linked (GlcNAc...) asparagine glycosylation sites follow: Asn319, Asn335, and Asn374. Residues 332-414 (CQGNSSGKDA…GELLSIRLAR (83 aa)) enclose the PAN domain. 2 disulfide bridges follow: Cys367–Cys388 and Cys371–Cys377. The chain crosses the membrane as a helical span at residues 426–446 (IVASTVSLTLFVIFGFAAFGF). Residues 447-806 (WRCRVEHNAH…EMTESVIQGR (360 aa)) are Cytoplasmic-facing. The Protein kinase domain maps to 489–777 (FSLSNKLGPG…DLPLPKKPTF (289 aa)). Residues 495 to 503 (LGPGGFGSV) and Lys520 contribute to the ATP site. Ser526 and Ser541 each carry phosphoserine. Residues 581–598 (RKKLELDWPKRFEIIEGI) form a caM-binding region. The Proton acceptor role is filled by Asp617. Residues Ser621 and Ser634 each carry the phosphoserine modification. The residue at position 651 (Thr651) is a Phosphothreonine. A phosphoserine mark is found at Ser694, Ser695, and Ser788.

The protein belongs to the protein kinase superfamily. Ser/Thr protein kinase family.

The protein localises to the cell membrane. The catalysed reaction is L-seryl-[protein] + ATP = O-phospho-L-seryl-[protein] + ADP + H(+). It catalyses the reaction L-threonyl-[protein] + ATP = O-phospho-L-threonyl-[protein] + ADP + H(+). This Arabidopsis thaliana (Mouse-ear cress) protein is G-type lectin S-receptor-like serine/threonine-protein kinase At1g61430.